A 90-amino-acid polypeptide reads, in one-letter code: Conotoxin ba9a (90 aa).

The first 27 residues, 1-27, serve as a signal peptide directing secretion; that stretch reads MHLSLARSAGLMWLLLFAVGNFVGVQP. Residues 28–62 constitute a propeptide that is removed on maturation; it reads GQITRDVDNGQLADNRRNLQSLRKPMTLFKSLNKR. Glutamate 67 is modified (4-carboxyglutamate). 2 positions are modified to 4-hydroxyproline: proline 76 and proline 80.

In terms of tissue distribution, expressed by the venom duct.

The protein resides in the secreted. The sequence is that of Conotoxin ba9a from Conus bayani (Bayan's cone).